The chain runs to 113 residues: UPF0122 protein LCA_0713 (113 aa).

The protein belongs to the UPF0122 family.

Might take part in the signal recognition particle (SRP) pathway. This is inferred from the conservation of its genetic proximity to ftsY/ffh. May be a regulatory protein. The protein is UPF0122 protein LCA_0713 of Latilactobacillus sakei subsp. sakei (strain 23K) (Lactobacillus sakei subsp. sakei).